Consider the following 493-residue polypeptide: Transcript termination protein A18 (493 aa).

Residues 100 to 256 (MIELKRPLYI…NSIINIAKLS (157 aa)) form the Helicase ATP-binding domain. 113-120 (LACGFGKT) contacts ATP. The short motif at 206-209 (DESH) is the DESH box element.

The protein belongs to the helicase family. Poxviruses subfamily. In terms of assembly, interacts with G2. Might be part of a transcription complex composed at least of G2, A18, and H5.

It localises to the virion. Its function is as follows. DNA helicase which seems to act as a postreplicative transcription termination factor. Involved in ATP-dependent release of nascent RNA. Forms a stable complex with single-stranded DNA, and to a lesser extent RNA. This Camelus protein is Transcript termination protein A18.